The primary structure comprises 370 residues: Putative L-lysine 2,3-aminomutase aq_454 (370 aa).

One can recognise a Radical SAM core domain in the interval 107-322 (HRYPDRVLLN…RGRLSGFGIP (216 aa)). Positions 121, 125, and 128 each coordinate [4Fe-4S] cluster. Lysine 334 carries the N6-(pyridoxal phosphate)lysine modification.

Belongs to the radical SAM superfamily. KamA family. [4Fe-4S] cluster is required as a cofactor. It depends on pyridoxal 5'-phosphate as a cofactor.

This Aquifex aeolicus (strain VF5) protein is Putative L-lysine 2,3-aminomutase aq_454.